A 236-amino-acid chain; its full sequence is N-alpha-acetyltransferase 40 (236 aa).

Residue Gly2 is the site of N-myristoyl glycine attachment. Residues 63 to 217 (SDLDQKTIDW…DCTYEILSKR (155 aa)) enclose the N-acetyltransferase domain. Substrate contacts are provided by residues Tyr85, 127–129 (DVE), and Tyr138. Residues 140 to 142 (VQL) and 148 to 153 (RKGVGK) contribute to the acetyl-CoA site. A substrate-binding site is contributed by Thr174. Residue Asn179 participates in acetyl-CoA binding. Tyr211 is a substrate binding site.

It belongs to the acetyltransferase family. NAA40 subfamily.

The protein localises to the cytoplasm. It localises to the nucleus. It carries out the reaction N-terminal L-seryl-[histone H4] + acetyl-CoA = N-terminal N(alpha)-acetyl-L-seryl-[histone H4] + CoA + H(+). The enzyme catalyses N-terminal L-seryl-[histone H2A] + acetyl-CoA = N-terminal N(alpha)-acetyl-L-seryl-[histone H2A] + CoA + H(+). Functionally, N-alpha-acetyltransferase that specifically mediates the acetylation of the N-terminal residues of histones H4 and H2A. In contrast to other N-alpha-acetyltransferase, has a very specific selectivity for histones H4 and H2A N-terminus and specifically recognizes the 'Ser-Gly-Arg-Gly sequence'. This is N-alpha-acetyltransferase 40 (naa40) from Xenopus laevis (African clawed frog).